A 420-amino-acid polypeptide reads, in one-letter code: Pre-mRNA-splicing factor RBM22 (420 aa).

Residue Ala-2 is modified to N-acetylalanine. A phosphoserine mark is found at Ser-4 and Ser-102. Glycyl lysine isopeptide (Lys-Gly) (interchain with G-Cter in SUMO2) cross-links involve residues Lys-139 and Lys-149. The segment at Arg-159 to Pro-186 adopts a C3H1-type zinc-finger fold. Position 212 is an N6-acetyllysine (Lys-212). The RRM domain occupies Thr-232–Ser-305. A Glycyl lysine isopeptide (Lys-Gly) (interchain with G-Cter in SUMO2) cross-link involves residue Lys-290. 2 disordered regions span residues Gly-303 to Glu-343 and Ala-372 to Pro-420. A compositionally biased stretch (basic and acidic residues) spans Arg-309 to Thr-318.

It belongs to the SLT11 family. As to quaternary structure, component of the pre-catalytic and catalytic spliceosome complexes. Component of the postcatalytic spliceosome P complex. Interacts with PDCD6; the interaction induces translocation of PDCD6 in the cytoplasm. Interacts with PPIL1.

It localises to the nucleus. The protein resides in the cytoplasm. In terms of biological role, required for pre-mRNA splicing as component of the activated spliceosome. Involved in the first step of pre-mRNA splicing. Binds directly to the internal stem-loop (ISL) domain of the U6 snRNA and to the pre-mRNA intron near the 5' splice site during the activation and catalytic phases of the spliceosome cycle. Involved in both translocations of the nuclear SLU7 to the cytoplasm and the cytosolic calcium-binding protein PDCD6 to the nucleus upon cellular stress responses. This is Pre-mRNA-splicing factor RBM22 (RBM22) from Homo sapiens (Human).